A 454-amino-acid chain; its full sequence is Bifunctional protein GlmU (454 aa).

The pyrophosphorylase stretch occupies residues Met-1–Arg-227. UDP-N-acetyl-alpha-D-glucosamine is bound by residues Leu-9–Gly-12, Lys-23, Gln-74, Gly-79–Thr-80, Tyr-101–Asp-103, Gly-138, Glu-152, Asn-167, and Asn-225. Asp-103 is a Mg(2+) binding site. Asn-225 lines the Mg(2+) pocket. Residues Leu-228 to Glu-248 form a linker region. The N-acetyltransferase stretch occupies residues Gly-249–Lys-454. Positions 331 and 349 each coordinate UDP-N-acetyl-alpha-D-glucosamine. His-361 (proton acceptor) is an active-site residue. Residues Tyr-364 and Asn-375 each coordinate UDP-N-acetyl-alpha-D-glucosamine. Acetyl-CoA-binding positions include Ala-378, Asn-384–Tyr-385, Ser-403, Ala-421, and Arg-438.

This sequence in the N-terminal section; belongs to the N-acetylglucosamine-1-phosphate uridyltransferase family. In the C-terminal section; belongs to the transferase hexapeptide repeat family. As to quaternary structure, homotrimer. Mg(2+) is required as a cofactor.

It localises to the cytoplasm. The enzyme catalyses alpha-D-glucosamine 1-phosphate + acetyl-CoA = N-acetyl-alpha-D-glucosamine 1-phosphate + CoA + H(+). It catalyses the reaction N-acetyl-alpha-D-glucosamine 1-phosphate + UTP + H(+) = UDP-N-acetyl-alpha-D-glucosamine + diphosphate. It participates in nucleotide-sugar biosynthesis; UDP-N-acetyl-alpha-D-glucosamine biosynthesis; N-acetyl-alpha-D-glucosamine 1-phosphate from alpha-D-glucosamine 6-phosphate (route II): step 2/2. Its pathway is nucleotide-sugar biosynthesis; UDP-N-acetyl-alpha-D-glucosamine biosynthesis; UDP-N-acetyl-alpha-D-glucosamine from N-acetyl-alpha-D-glucosamine 1-phosphate: step 1/1. The protein operates within bacterial outer membrane biogenesis; LPS lipid A biosynthesis. Catalyzes the last two sequential reactions in the de novo biosynthetic pathway for UDP-N-acetylglucosamine (UDP-GlcNAc). The C-terminal domain catalyzes the transfer of acetyl group from acetyl coenzyme A to glucosamine-1-phosphate (GlcN-1-P) to produce N-acetylglucosamine-1-phosphate (GlcNAc-1-P), which is converted into UDP-GlcNAc by the transfer of uridine 5-monophosphate (from uridine 5-triphosphate), a reaction catalyzed by the N-terminal domain. In Mannheimia succiniciproducens (strain KCTC 0769BP / MBEL55E), this protein is Bifunctional protein GlmU.